The chain runs to 305 residues: Sulfate adenylyltransferase subunit 2 (305 aa).

Belongs to the PAPS reductase family. CysD subfamily. Heterodimer composed of CysD, the smaller subunit, and CysN.

It carries out the reaction sulfate + ATP + H(+) = adenosine 5'-phosphosulfate + diphosphate. It functions in the pathway sulfur metabolism; hydrogen sulfide biosynthesis; sulfite from sulfate: step 1/3. In terms of biological role, with CysN forms the ATP sulfurylase (ATPS) that catalyzes the adenylation of sulfate producing adenosine 5'-phosphosulfate (APS) and diphosphate, the first enzymatic step in sulfur assimilation pathway. APS synthesis involves the formation of a high-energy phosphoric-sulfuric acid anhydride bond driven by GTP hydrolysis by CysN coupled to ATP hydrolysis by CysD. The polypeptide is Sulfate adenylyltransferase subunit 2 (Pseudomonas fluorescens (strain ATCC BAA-477 / NRRL B-23932 / Pf-5)).